A 1080-amino-acid chain; its full sequence is Serine/threonine-protein kinase KIC1 (1080 aa).

The 254-residue stretch at 23-276 folds into the Protein kinase domain; that stretch reads FKRTEVIGRG…ADDLLKSKFI (254 aa). Residues 29–37 and Lys-52 contribute to the ATP site; that span reads IGRGKFGVV. The active-site Proton acceptor is Asp-144. Disordered regions lie at residues 308–347, 615–760, 787–831, and 901–956; these read EGSI…EIKR, KARS…LAPP, STLN…LQMP, and SQSI…NTGN. The span at 312-326 shows a compositional bias: low complexity; it reads PENEPSKPSEAPKPS. The segment covering 615 to 626 has biased composition (polar residues); that stretch reads KARSSTVTAGTP. A compositionally biased stretch (low complexity) spans 627–638; sequence SSSSSIQYKSPS. Polar residues predominate over residues 656–673; sequence STITNQKLGSAVASNSGI. Low complexity predominate over residues 674-689; sequence SSTPNNSNNYNNNTDS. A compositionally biased stretch (polar residues) spans 693–726; the sequence is RGSSGSNTANSTQMGITNPGNVTKLSTHKASSPS. Ser-735 is modified (phosphoserine). Polar residues predominate over residues 743-756; it reads SPTQNIGHNSTHTN. Over residues 787 to 807 the composition is skewed to low complexity; it reads STLNTISGNSSNNLTSSNYFS. Residues 808-821 show a composition bias toward basic and acidic residues; the sequence is NEKEGSRVNGDFKR. A compositionally biased stretch (polar residues) spans 901-913; that stretch reads SQSISNRKNSSAS. The segment covering 918–956 has biased composition (low complexity); it reads NILGSSVSGNVSGIGNNNVGSNNNSGPNNSVPLSANTGN.

It belongs to the protein kinase superfamily. Ser/Thr protein kinase family. Interacts with CDC31.

It catalyses the reaction L-seryl-[protein] + ATP = O-phospho-L-seryl-[protein] + ADP + H(+). It carries out the reaction L-threonyl-[protein] + ATP = O-phospho-L-threonyl-[protein] + ADP + H(+). Protein kinase involved in morphogenesis and cell integrity. The protein is Serine/threonine-protein kinase KIC1 (KIC1) of Saccharomyces cerevisiae (strain ATCC 204508 / S288c) (Baker's yeast).